A 328-amino-acid polypeptide reads, in one-letter code: B3 domain-containing protein At5g60140 (328 aa).

The segment at residues 13-109 (SKFFKPYLPS…FFNFSIFDHE (97 aa)) is a DNA-binding region (TF-B3). Positions 145–221 (LNSDDSDDSD…EDEDDLEDED (77 aa)) are disordered. Acidic residues-rich tracts occupy residues 148–182 (DDSD…AEDG) and 190–221 (GLED…EDED).

It is found in the nucleus. In Arabidopsis thaliana (Mouse-ear cress), this protein is B3 domain-containing protein At5g60140.